The sequence spans 46 residues: Iota-conotoxin-like R11.17 (46 aa).

4-hydroxyproline occurs at positions 2 and 11. Intrachain disulfides connect Cys5-Cys19, Cys12-Cys22, Cys18-Cys27, and Cys21-Cys38. Pro29 is subject to 4-hydroxyproline. The residue at position 44 (Phe44) is a D-phenylalanine.

Belongs to the conotoxin I1 superfamily. In terms of tissue distribution, expressed by the venom duct.

It localises to the secreted. Functionally, iota-conotoxins bind to voltage-gated sodium channels (Nav) and act as agonists by shifting the voltage-dependence of activation to more hyperpolarized levels. Produces general excitatory symptoms. The chain is Iota-conotoxin-like R11.17 from Conus radiatus (Rayed cone).